Consider the following 211-residue polypeptide: Inactive ribonuclease-like protein 10 (211 aa).

Positions 1-24 are cleaved as a signal peptide; sequence MKLTLVQIFFMMLLLLLGLGVGLG.

This sequence belongs to the pancreatic ribonuclease family. Post-translationally, the N-terminus is blocked. Glycosylated.

The protein localises to the secreted. In terms of biological role, secreted proximal epididymal protein required for post-testicular sperm maturation and male fertility. May be involved in sperm adhesion to the egg zona pellucida. Does not have ribonuclease activity. This Bos taurus (Bovine) protein is Inactive ribonuclease-like protein 10 (RNASE10).